The sequence spans 394 residues: Phosphoglycerate kinase (394 aa).

Residues 21–23 (DFN), Arg36, 59–62 (HLGR), Arg118, and Arg151 contribute to the substrate site. Phosphoserine is present on Ser183. Residues Lys201 and Gly292 each coordinate ATP. Thr299 is subject to Phosphothreonine. ATP-binding positions include Glu323 and 350-353 (GGDS).

Belongs to the phosphoglycerate kinase family. As to quaternary structure, monomer.

Its subcellular location is the cytoplasm. It carries out the reaction (2R)-3-phosphoglycerate + ATP = (2R)-3-phospho-glyceroyl phosphate + ADP. It participates in carbohydrate degradation; glycolysis; pyruvate from D-glyceraldehyde 3-phosphate: step 2/5. The protein is Phosphoglycerate kinase (pgk) of Priestia megaterium (strain DSM 319 / IMG 1521) (Bacillus megaterium).